Consider the following 208-residue polypeptide: ATP-dependent Clp protease proteolytic subunit (208 aa).

The active-site Nucleophile is the Ser98. His123 is a catalytic residue.

It belongs to the peptidase S14 family. In terms of assembly, fourteen ClpP subunits assemble into 2 heptameric rings which stack back to back to give a disk-like structure with a central cavity, resembling the structure of eukaryotic proteasomes.

The protein localises to the cytoplasm. It catalyses the reaction Hydrolysis of proteins to small peptides in the presence of ATP and magnesium. alpha-casein is the usual test substrate. In the absence of ATP, only oligopeptides shorter than five residues are hydrolyzed (such as succinyl-Leu-Tyr-|-NHMec, and Leu-Tyr-Leu-|-Tyr-Trp, in which cleavage of the -Tyr-|-Leu- and -Tyr-|-Trp bonds also occurs).. In terms of biological role, cleaves peptides in various proteins in a process that requires ATP hydrolysis. Has a chymotrypsin-like activity. Plays a major role in the degradation of misfolded proteins. The sequence is that of ATP-dependent Clp protease proteolytic subunit from Wolbachia sp. subsp. Brugia malayi (strain TRS).